We begin with the raw amino-acid sequence, 351 residues long: Glycerol-1-phosphate dehydrogenase [NAD(P)+] (351 aa).

NAD(+)-binding positions include 97–101 (GKVID) and 119–122 (TSPS). Aspartate 124 is a substrate binding site. Serine 128 provides a ligand contact to NAD(+). Aspartate 171 provides a ligand contact to substrate. Zn(2+)-binding residues include aspartate 171 and histidine 251. Position 255 (histidine 255) interacts with substrate. Residue histidine 267 participates in Zn(2+) binding.

This sequence belongs to the glycerol-1-phosphate dehydrogenase family. Homodimer. Zn(2+) serves as cofactor.

The protein resides in the cytoplasm. The enzyme catalyses sn-glycerol 1-phosphate + NAD(+) = dihydroxyacetone phosphate + NADH + H(+). It carries out the reaction sn-glycerol 1-phosphate + NADP(+) = dihydroxyacetone phosphate + NADPH + H(+). The protein operates within membrane lipid metabolism; glycerophospholipid metabolism. Functionally, catalyzes the NAD(P)H-dependent reduction of dihydroxyacetonephosphate (DHAP or glycerone phosphate) to glycerol 1-phosphate (G1P). The G1P thus generated is used as the glycerophosphate backbone of phospholipids in the cellular membranes of Archaea. This is Glycerol-1-phosphate dehydrogenase [NAD(P)+] from Saccharolobus islandicus (strain M.16.27) (Sulfolobus islandicus).